The chain runs to 151 residues: Myosin light polypeptide 6 (151 aa).

C2 carries the N-acetylcysteine modification. 3 EF-hand domains span residues 7–42 (EQTA…LGQN), 84–119 (GCFE…LGEK), and 119–151 (KMTE…VLSG).

As to quaternary structure, myosin is a hexamer of 2 heavy chains and 4 light chains.

Functionally, regulatory light chain of myosin. Does not bind calcium. The chain is Myosin light polypeptide 6 (MYL6) from Gallus gallus (Chicken).